A 385-amino-acid polypeptide reads, in one-letter code: GDSL esterase/lipase 5 (385 aa).

Residues 1–35 (MRESTLMEKVTRRTISSFIFFIVSSTILFLAGKSS) form the signal peptide. N-linked (GlcNAc...) asparagine glycosylation occurs at Asn45. Catalysis depends on Ser55, which acts as the Nucleophile. N-linked (GlcNAc...) asparagine glycans are attached at residues Asn66, Asn194, Asn211, and Asn289. Active-site residues include Asp345 and His348.

It belongs to the 'GDSL' lipolytic enzyme family.

Its subcellular location is the secreted. The polypeptide is GDSL esterase/lipase 5 (GLIP5) (Arabidopsis thaliana (Mouse-ear cress)).